Reading from the N-terminus, the 497-residue chain is uncharacterized protein (497 aa).

The interval 58-79 (ISTRSFRNDGNDSDPQTLDPDA) is disordered. 12 helical membrane passes run 86–106 (IAFV…ALPI), 120–140 (FSGL…YPML), 155–175 (FRPL…YSLA), 180–200 (WLYL…MFLY), 222–242 (LNIL…GLLA), 258–278 (VGSW…SIFF), 309–329 (FMLV…AGYQ), 348–368 (GNFL…STFL), 378–398 (MLYG…LDVL), 407–427 (FVLY…LISL), 438–458 (ILVG…GAIC), and 468–488 (VGFI…LLFL).

Belongs to the major facilitator superfamily.

The protein resides in the membrane. This is an uncharacterized protein from Schizosaccharomyces pombe (strain 972 / ATCC 24843) (Fission yeast).